A 2616-amino-acid chain; its full sequence is Serine protease ndl (2616 aa).

The N-terminal stretch at 1-43 (MNYNMDEMEATRLLRHPRRWWSIGFGKRIVAISILVIIVLLFS) is a signal peptide. Ser215 and Ser220 each carry phosphoserine. A WIID 1 repeat occupies 261–269 (ISWIIDGHD). Asn291 is a glycosylation site (N-linked (GlcNAc...) asparagine). A WIID 2 repeat occupies 320–328 (ISWILDHFD). A glycan (N-linked (GlcNAc...) asparagine) is linked at Asn347. The disordered stretch occupies residues 352–375 (SASSEPIVDTENTNSDHVPTTENG). N-linked (GlcNAc...) asparagine glycosylation is present at Asn379. Residues 399–407 (FDWILDGEE) form a WIID 3 repeat. Asn417 carries an N-linked (GlcNAc...) asparagine glycan. WIID repeat units follow at residues 446-454 (FDWIIDGRE) and 477-485 (FDWIIDGEE). N-linked (GlcNAc...) asparagine glycosylation is found at Asn492 and Asn515. The WIID 6 repeat unit spans residues 528–536 (FDWIIDGGE). Low complexity predominate over residues 537–547 (SSGEVSTSSTS). Residues 537 to 574 (SSGEVSTSSTSQPKLTTREAISNPESPRSSHPLDNPTS) form a disordered region. Residues 548 to 565 (QPKLTTREAISNPESPRS) show a composition bias toward polar residues. Ser574 and Ser581 each carry phosphoserine. Asn598 carries an N-linked (GlcNAc...) asparagine glycan. The O-linked (Xyl...) (glycosaminoglycan) serine glycan is linked to Ser794. The tract at residues 798–817 (GQGANIFSKNASPQKPTNGQ) is disordered. The span at 804–817 (FSKNASPQKPTNGQ) shows a compositional bias: polar residues. A glycan (N-linked (GlcNAc...) asparagine) is linked at Asn827. An O-linked (Xyl...) (glycosaminoglycan) serine glycan is attached at Ser829. Asn861 carries an N-linked (GlcNAc...) asparagine glycan. LDL-receptor class A domains follow at residues 889–929 (SRCP…ACTC) and 955–1006 (FGCE…QCSM). 3 cysteine pairs are disulfide-bonded: Cys891/Cys905, Cys899/Cys918, and Cys912/Cys927. The 28-residue stretch at 929-956 (CADRVDEERLCDGYEDCPMGEDELGCFG) folds into the LDL-receptor class A 2; truncated domain. 3 disulfide bridges follow: Cys957–Cys982, Cys964–Cys995, and Cys989–Cys1004. N-linked (GlcNAc...) asparagine glycosylation occurs at Asn975. A Cell attachment site motif is present at residues 1031–1033 (RGD). The N-linked (GlcNAc...) asparagine glycan is linked to Asn1064. Ser1134 and Ser1136 each carry phosphoserine. Residues 1145-1383 (IVGGSYTSAL…YLDWLEMATT (239 aa)) enclose the Peptidase S1 1 domain. Cys1170 and Cys1186 are disulfide-bonded. Residues His1185 and Asp1233 each act as charge relay system in the active site. Intrachain disulfides connect Cys1276-Cys1338, Cys1305-Cys1317, Cys1328-Cys1359, Cys1396-Cys1408, Cys1401-Cys1421, and Cys1415-Cys1430. Ser1332 functions as the Charge relay system in the catalytic mechanism. Positions 1394-1432 (QLCPGFICVWGGKRCIAKRQRCDRNVDCLGGEDEVGCTY) constitute an LDL-receptor class A 4 domain. Asn1445 carries N-linked (GlcNAc...) asparagine glycosylation. 2 disordered regions span residues 1530 to 1557 (FTVS…PSTN) and 1683 to 1704 (PTTT…HSEK). 2 stretches are compositionally biased toward low complexity: residues 1537-1557 (TSPS…PSTN) and 1683-1700 (PTTT…SSST). The LDL-receptor class A 5; truncated domain occupies 1713 to 1743 (FVCKKMSQIVDIMMRCDRKVDCEDGTDELDC). 6 disulfides stabilise this stretch: Cys1728/Cys1745, Cys1734/Cys1764, Cys1758/Cys1773, Cys1776/Cys1789, Cys1783/Cys1802, and Cys1796/Cys1811. The LDL-receptor class A 6; truncated domain maps to 1745–1775 (CKDYLKGSLKGLICDGKADCEDLTDEQNCVE). An LDL-receptor class A 7 domain is found at 1774-1813 (VECQSNEFRCPLSKTCLPLSSRCDNKVDCKFKEDEKDCFA). N-linked (GlcNAc...) asparagine glycans are attached at residues Asn1878, Asn1956, and Asn2023. Residues 2027–2301 (LVNEQLHEAI…LQDIIDKPSC (275 aa)) enclose the Peptidase S1 2 domain. Cys2055 and Cys2071 are disulfide-bonded. Asn2144, Asn2173, Asn2197, Asn2237, and Asn2269 each carry an N-linked (GlcNAc...) asparagine glycan. An intrachain disulfide couples Cys2177 to Cys2230. LDL-receptor class A domains follow at residues 2308–2346 (PDCS…KCRQ), 2349–2389 (QQCA…ICSC), and 2419–2459 (CNCT…YCFG). 6 cysteine pairs are disulfide-bonded: Cys2310/Cys2320, Cys2315/Cys2333, Cys2327/Cys2344, Cys2351/Cys2364, Cys2358/Cys2377, and Cys2371/Cys2387. The region spanning 2387–2419 (CSCFTYLQATDPSKICDGKRNCWDKSDESSVLC) is the LDL-receptor class A 10; truncated domain. Asn2420 is a glycosylation site (N-linked (GlcNAc...) asparagine). 3 disulfides stabilise this stretch: Cys2421/Cys2435, Cys2428/Cys2448, and Cys2442/Cys2457. Residues Asn2556 and Asn2601 are each glycosylated (N-linked (GlcNAc...) asparagine).

Belongs to the peptidase S1 family. In terms of processing, requires cleavage for activation (presumably). In terms of tissue distribution, follicle.

Its subcellular location is the secreted. It is found in the extracellular space. The protein resides in the extracellular matrix. Its function is as follows. Component of the extracellular signaling pathway that establishes the dorsal-ventral pathway of the embryo. A protease cascade involving ndl, gd, snk and ea results in activation of the spz Toll receptor ligand; acts upstream of gd, snk and ea and is required for proteolytic processing of gd. Activation of ea requires activation of the ndl-gd-snk protease cascade and sulfation of a vitelline membrane component by pip. Localized activation of the Toll receptor in the ventral region of the embryo defines cell identities along the dorsal-ventral continuum. The sequence is that of Serine protease ndl from Drosophila melanogaster (Fruit fly).